Here is a 542-residue protein sequence, read N- to C-terminus: Protein lin-9 homolog (542 aa).

Ala-2 bears the N-acetylalanine mark. Residues 2–296 form a sufficient for interaction with RB1 region; sequence AELDQLPDES…QKQRPSRFFM (295 aa). A Glycyl lysine isopeptide (Lys-Gly) (interchain with G-Cter in SUMO2) cross-link involves residue Lys-21. Ser-65 and Ser-95 each carry phosphoserine. Residues Thr-96 and Thr-304 each carry the phosphothreonine modification. Residues Ser-309 and Ser-321 each carry the phosphoserine modification. A coiled-coil region spans residues 354–413; the sequence is MIKKEHIKKLREMNTEAEKLKSYSMPISIEFQRRYATIVLELEQLNKDLNKVLHKVQQYC.

It belongs to the lin-9 family. In terms of assembly, component of the DREAM complex (also named LINC complex) at least composed of E2F4, E2F5, LIN9, LIN37, LIN52, LIN54, MYBL1, MYBL2, RBL1, RBL2, RBBP4, TFDP1 and TFDP2. The complex exists in quiescent cells where it represses cell cycle-dependent genes. It dissociates in S phase when LIN9, LIN37, LIN52 and LIN54 form a subcomplex that binds to MYBL2. Interacts with RB1. In terms of tissue distribution, expressed in thymus and testis.

The protein resides in the nucleus. It is found in the nucleoplasm. In terms of biological role, acts as a tumor suppressor. Inhibits DNA synthesis. Its ability to inhibit oncogenic transformation is mediated through its association with RB1. Plays a role in the expression of genes required for the G1/S transition. In Homo sapiens (Human), this protein is Protein lin-9 homolog (LIN9).